A 683-amino-acid polypeptide reads, in one-letter code: THO complex subunit 5 (683 aa).

The interval 1-42 (MSSESSKKRKPKVIRSDGAPAEGKRNRSDTEQEGKYYSEEAE) is disordered. The residue at position 2 (S2) is an N-acetylserine. Positions 2–144 (SSESSKKRKP…YEVMHLQKEI (143 aa)) are interaction with CSF1R. Residues 2 to 199 (SSESSKKRKP…RLDWELEQRK (198 aa)) form an interaction with THOC7 region. 2 positions are modified to phosphoserine: S5 and S6. Residues 7-10 (KKRK) carry the Nuclear localization signal motif. Basic and acidic residues predominate over residues 22 to 42 (EGKRNRSDTEQEGKYYSEEAE). A coiled-coil region spans residues 81–247 (AIEIEERRIQ…QASLPVQEYL (167 aa)). K153 is covalently cross-linked (Glycyl lysine isopeptide (Lys-Gly) (interchain with G-Cter in SUMO2)). Y225 carries the post-translational modification Phosphotyrosine; by SRC. Residues 247–683 (LFMPFDQAHK…NHPQGFFSHR (437 aa)) are tandem RWD domains. The interval 301 to 336 (FKPPEDSQDDESDSDAEEEQTTKRRRPTLGVQLDDK) is disordered. A compositionally biased stretch (acidic residues) spans 306 to 319 (DSQDDESDSDAEEE). 3 positions are modified to phosphoserine: S307, S312, and S314. T328 is modified (phosphothreonine).

It belongs to the THOC5 family. In terms of assembly, component of the THO subcomplex, which is composed of THOC1, THOC2, THOC3, THOC5, THOC6 and THOC7. The THO subcomplex interacts with DDX39B to form the THO-DDX39B complex which multimerizes into a 28-subunit tetrameric assembly. Component of the transcription/export (TREX) complex at least composed of ALYREF/THOC4, DDX39B, SARNP/CIP29, CHTOP and the THO subcomplex; in the complex interacts with THOC1, THOC2, THOC5, THOC6 and THOC7; forms a coiled-coil dimer with THOC7; together with THOC6 and THOC7, plays a key structural role in oligomerization of the THO-DDX39B complex. TREX seems to have a dynamic structure involving ATP-dependent remodeling. Interacts with phosphorylated CSF1R. Interacts (via N-terminus) with the NTF2 domain of NXF1. Forms a complex with CEBPB. Interacts with CPSF6; indicative for an association with the cleavage factor Im (CFIm) complex. Interacts with LUZP4. Interacts with NCBP3. In terms of processing, phosphorylated on tyrosine upon binding to activated CSF1R; which causes a dissociation of the two proteins. Phosphorylation on Ser-5 and/or Ser-6 is required for nuclear export. Phosphorylated on Thr-328 in insulin-stimulated adipocytes. Phosphorylation at Tyr-225 modulates mRNA binding. In terms of tissue distribution, ubiquitously expressed.

The protein localises to the nucleus. Its subcellular location is the cytoplasm. Functionally, component of the THO subcomplex of the TREX complex which is thought to couple mRNA transcription, processing and nuclear export, and which specifically associates with spliced mRNA and not with unspliced pre-mRNA. Plays a key structural role in the oligomerization of the THO-DDX39B complex. TREX is recruited to spliced mRNAs by a transcription-independent mechanism, binds to mRNA upstream of the exon-junction complex (EJC) and is recruited in a splicing- and cap-dependent manner to a region near the 5' end of the mRNA where it functions in mRNA export to the cytoplasm via the TAP/NXF1 pathway. THOC5 in conjunction with ALYREF/THOC4 functions in NXF1-NXT1 mediated nuclear export of HSP70 mRNA; both proteins enhance the RNA binding activity of NXF1 and are required for NXF1 localization to the nuclear rim. Involved in transcription elongation and genome stability. Involved in alternative polyadenylation site choice by recruiting CPSF6 to 5' region of target genes; probably mediates association of the TREX and CFIm complexes. Regulates the expression of myeloid transcription factors CEBPA, CEBPB and GAB2 by enhancing the levels of phosphatidylinositol 3,4,5-trisphosphate. May be involved in the differentiation of granulocytes and adipocytes. Essential for hematopoietic primitive cell survival and plays an integral role in monocytic development. In terms of biological role, (Microbial infection) The TREX complex is essential for the export of Kaposi's sarcoma-associated herpesvirus (KSHV) intronless mRNAs and infectious virus production. The sequence is that of THO complex subunit 5 (THOC5) from Homo sapiens (Human).